Reading from the N-terminus, the 37-residue chain is Large ribosomal subunit protein bL36 (37 aa).

The protein belongs to the bacterial ribosomal protein bL36 family.

The chain is Large ribosomal subunit protein bL36 from Campylobacter jejuni subsp. jejuni serotype O:6 (strain 81116 / NCTC 11828).